The chain runs to 421 residues: NAD-specific glutamate dehydrogenase (421 aa).

Positions 71 and 95 each coordinate substrate. Lysine 107 (proton donor) is an active-site residue. Threonine 191 and asparagine 222 together coordinate NAD(+). Residue serine 355 coordinates substrate.

This sequence belongs to the Glu/Leu/Phe/Val dehydrogenases family. As to quaternary structure, homohexamer.

It catalyses the reaction L-glutamate + NAD(+) + H2O = 2-oxoglutarate + NH4(+) + NADH + H(+). The chain is NAD-specific glutamate dehydrogenase (gluD) from Clostridioides difficile (Peptoclostridium difficile).